Reading from the N-terminus, the 901-residue chain is Probable inorganic carbon transporter subunit DabA (901 aa).

Zn(2+) contacts are provided by Cys-424, Asp-426, His-606, and Cys-621.

The protein belongs to the inorganic carbon transporter (TC 9.A.2) DabA family. In terms of assembly, forms a complex with DabB. The cofactor is Zn(2+).

It is found in the cell membrane. Part of an energy-coupled inorganic carbon pump. In Staphylococcus aureus (strain NCTC 8325 / PS 47), this protein is Probable inorganic carbon transporter subunit DabA.